Consider the following 399-residue polypeptide: Serine/threonine transporter SstT (399 aa).

9 consecutive transmembrane segments (helical) span residues Leu8–Phe28, Ile37–Leu57, Ile77–Leu97, Pro134–Gly154, Val178–Phe198, Leu212–Val232, Val284–Leu304, Leu312–Ala332, and Val348–Ile370.

This sequence belongs to the dicarboxylate/amino acid:cation symporter (DAACS) (TC 2.A.23) family.

Its subcellular location is the cell inner membrane. The enzyme catalyses L-serine(in) + Na(+)(in) = L-serine(out) + Na(+)(out). It carries out the reaction L-threonine(in) + Na(+)(in) = L-threonine(out) + Na(+)(out). Its function is as follows. Involved in the import of serine and threonine into the cell, with the concomitant import of sodium (symport system). This Acinetobacter baylyi (strain ATCC 33305 / BD413 / ADP1) protein is Serine/threonine transporter SstT.